Here is a 347-residue protein sequence, read N- to C-terminus: Fructose-1,6-bisphosphatase class 1 2 (347 aa).

Residues Glu92, Asp111, Leu113, and Asp114 each contribute to the Mg(2+) site. Residues 114–117 (DGSS) and Asn202 each bind substrate. Residue Glu274 participates in Mg(2+) binding.

The protein belongs to the FBPase class 1 family. In terms of assembly, homotetramer. Mg(2+) serves as cofactor.

The protein localises to the cytoplasm. The enzyme catalyses beta-D-fructose 1,6-bisphosphate + H2O = beta-D-fructose 6-phosphate + phosphate. Its pathway is carbohydrate biosynthesis; Calvin cycle. The chain is Fructose-1,6-bisphosphatase class 1 2 from Bradyrhizobium sp. (strain BTAi1 / ATCC BAA-1182).